A 101-amino-acid polypeptide reads, in one-letter code: MNKSKRPFTKSKRSFRRRLPPIQSGDRIDYRNMSLISRFISEQGKILSRRVNRVTLKQQRLITMAIKQARILSLLPFLNNQKQFERSESTPRTTSLRTRKK.

Basic residues predominate over residues 1–19 (MNKSKRPFTKSKRSFRRRL). The disordered stretch occupies residues 1–20 (MNKSKRPFTKSKRSFRRRLP).

This sequence belongs to the bacterial ribosomal protein bS18 family. Part of the 30S ribosomal subunit.

Its subcellular location is the plastid. It localises to the chloroplast. The polypeptide is Small ribosomal subunit protein bS18c (Arabis hirsuta (Hairy rock-cress)).